The sequence spans 1105 residues: Carbamoyl phosphate synthase large chain (1105 aa).

The tract at residues 1 to 402 is carboxyphosphate synthetic domain; the sequence is MPKRDDIEKV…ALGKAVRSLE (402 aa). Residues Arg-129, Arg-169, Gly-175, Gly-176, Lys-208, Val-210, Glu-215, Gly-241, Ile-242, His-243, Gln-285, and Glu-299 each contribute to the ATP site. The ATP-grasp 1 domain maps to 133–328; sequence KTAMKNCGLE…IAKISALLAV (196 aa). Mg(2+)-binding residues include Gln-285, Glu-299, and Asn-301. 3 residues coordinate Mn(2+): Gln-285, Glu-299, and Asn-301. The interval 403 to 542 is oligomerization domain; sequence LDIAPKLDLR…STYNGMENET (140 aa). Positions 543–945 are carbamoyl phosphate synthetic domain; sequence IPSKRRKIMV…AFAKAQLSAD (403 aa). An ATP-grasp 2 domain is found at 667–858; it reads AKFLKQSGLS…VAKIAAKTII (192 aa). 10 residues coordinate ATP: Arg-703, Lys-742, Leu-744, Glu-749, Gly-774, Ile-775, His-776, Ser-777, Gln-817, and Glu-829. Residues Gln-817, Glu-829, and Asn-831 each coordinate Mg(2+). Residues Gln-817, Glu-829, and Asn-831 each contribute to the Mn(2+) site. The region spanning 940 to 1101 is the MGS-like domain; it reads AQLSADGIST…QDIFYAQQNT (162 aa). Residues 946-1105 form an allosteric domain region; it reads GISTKSLLVT…YAQQNTLLKK (160 aa).

Belongs to the CarB family. As to quaternary structure, composed of two chains; the small (or glutamine) chain promotes the hydrolysis of glutamine to ammonia, which is used by the large (or ammonia) chain to synthesize carbamoyl phosphate. Tetramer of heterodimers (alpha,beta)4. The cofactor is Mg(2+). Mn(2+) serves as cofactor.

It carries out the reaction hydrogencarbonate + L-glutamine + 2 ATP + H2O = carbamoyl phosphate + L-glutamate + 2 ADP + phosphate + 2 H(+). The enzyme catalyses hydrogencarbonate + NH4(+) + 2 ATP = carbamoyl phosphate + 2 ADP + phosphate + 2 H(+). It functions in the pathway amino-acid biosynthesis; L-arginine biosynthesis; carbamoyl phosphate from bicarbonate: step 1/1. The protein operates within pyrimidine metabolism; UMP biosynthesis via de novo pathway; (S)-dihydroorotate from bicarbonate: step 1/3. Large subunit of the glutamine-dependent carbamoyl phosphate synthetase (CPSase). CPSase catalyzes the formation of carbamoyl phosphate from the ammonia moiety of glutamine, carbonate, and phosphate donated by ATP, constituting the first step of 2 biosynthetic pathways, one leading to arginine and/or urea and the other to pyrimidine nucleotides. The large subunit (synthetase) binds the substrates ammonia (free or transferred from glutamine from the small subunit), hydrogencarbonate and ATP and carries out an ATP-coupled ligase reaction, activating hydrogencarbonate by forming carboxy phosphate which reacts with ammonia to form carbamoyl phosphate. This chain is Carbamoyl phosphate synthase large chain, found in Pseudothermotoga lettingae (strain ATCC BAA-301 / DSM 14385 / NBRC 107922 / TMO) (Thermotoga lettingae).